A 286-amino-acid polypeptide reads, in one-letter code: 4-hydroxy-tetrahydrodipicolinate synthase 2 (286 aa).

Pyruvate is bound at residue threonine 45. The active-site Proton donor/acceptor is tyrosine 133. The active-site Schiff-base intermediate with substrate is the lysine 161. Residue isoleucine 203 coordinates pyruvate.

This sequence belongs to the DapA family. Homotetramer; dimer of dimers.

It is found in the cytoplasm. The catalysed reaction is L-aspartate 4-semialdehyde + pyruvate = (2S,4S)-4-hydroxy-2,3,4,5-tetrahydrodipicolinate + H2O + H(+). It participates in amino-acid biosynthesis; L-lysine biosynthesis via DAP pathway; (S)-tetrahydrodipicolinate from L-aspartate: step 3/4. In terms of biological role, catalyzes the condensation of (S)-aspartate-beta-semialdehyde [(S)-ASA] and pyruvate to 4-hydroxy-tetrahydrodipicolinate (HTPA). In Clostridium acetobutylicum (strain ATCC 824 / DSM 792 / JCM 1419 / IAM 19013 / LMG 5710 / NBRC 13948 / NRRL B-527 / VKM B-1787 / 2291 / W), this protein is 4-hydroxy-tetrahydrodipicolinate synthase 2.